Reading from the N-terminus, the 88-residue chain is UPF0297 protein YrzL (88 aa).

The protein belongs to the UPF0297 family.

This Bacillus subtilis (strain 168) protein is UPF0297 protein YrzL (yrzL).